We begin with the raw amino-acid sequence, 306 residues long: Solute carrier family 25 member 48 (306 aa).

Solcar repeat units follow at residues 3–86, 101–200, and 209–296; these read SFQL…TQRF, RSLS…LSEW, and PSPY…SLKA. 6 consecutive transmembrane segments (helical) span residues 9 to 29, 61 to 81, 107 to 127, 184 to 204, 212 to 232, and 272 to 290; these read FVAG…LDTV, GMSF…GVFS, LLAS…VELI, IPGY…ITPE, YAAW…ATPM, and ITVN…FLGY.

This sequence belongs to the mitochondrial carrier (TC 2.A.29) family.

The protein resides in the mitochondrion inner membrane. In Mus musculus (Mouse), this protein is Solute carrier family 25 member 48 (Slc25a48).